The following is an 81-amino-acid chain: Trefoil factor 3 (81 aa).

The N-terminal stretch at 1 to 22 (METRALWLMLLVVLVAGSSGIA) is a signal peptide. The 44-residue stretch at 31–74 (SQCMVPANVRVDCGYPSVTSEQCNNRGCCFDSSIPNVPWCFKPL) folds into the P-type domain. Cystine bridges form between Cys33/Cys59, Cys43/Cys58, and Cys53/Cys70.

As to quaternary structure, monomer. Homodimer; disulfide-linked. In terms of tissue distribution, expressed in goblet cells of the intestines and colon (at protein level). Expressed abundantly in goblet cells of intestine and colon, and at low levels in stomach. No expression in brain, lung, spleen, kidney, uterus, pancreas, liver, heart or thymus.

The protein resides in the secreted. Its subcellular location is the extracellular space. It is found in the extracellular matrix. The protein localises to the cytoplasm. In terms of biological role, involved in the maintenance and repair of the intestinal mucosa. Promotes the mobility of epithelial cells in healing processes (motogen). The polypeptide is Trefoil factor 3 (Tff3) (Mus musculus (Mouse)).